Here is a 149-residue protein sequence, read N- to C-terminus: MFSPQSRLRHAVADTFAMVVYCSVVNMCIEVFLSGMSFEQSFYSRLVAIPVNILIAWPYGMYRDLFMRAARKVSPSGWIKNLADILAYVTFQSPVYVAILLVVGADWHQIMAAVSSNIVVSMLMGAVYGYFLDYCRRLFKVSRYQQVKA.

The next 4 helical transmembrane spans lie at 16 to 36 (FAMV…LSGM), 46 to 66 (LVAI…RDLF), 85 to 105 (ILAY…VVGA), and 112 to 132 (AAVS…GYFL).

Belongs to the AlaE exporter family.

It localises to the cell inner membrane. In terms of biological role, exports L-alanine. In Shigella flexneri, this protein is L-alanine exporter AlaE.